The primary structure comprises 652 residues: Beta-glucuronidase (652 aa).

A signal peptide spans 1–22 (MVRGPAGAWAVLGPLLWGCGLA). Residues asparagine 173 and asparagine 420 are each glycosylated (N-linked (GlcNAc...) asparagine). Glutamate 451 (proton donor) is an active-site residue. A glycan (N-linked (GlcNAc...) asparagine) is linked at asparagine 631.

The protein belongs to the glycosyl hydrolase 2 family. In terms of assembly, homotetramer.

Its subcellular location is the lysosome. The catalysed reaction is a beta-D-glucuronoside + H2O = D-glucuronate + an alcohol. With respect to regulation, inhibited by L-aspartic acid. Functionally, plays an important role in the degradation of dermatan and keratan sulfates. In Sus scrofa (Pig), this protein is Beta-glucuronidase (GUSB).